The following is a 394-amino-acid chain: Guanine nucleotide-binding protein G(s) subunit alpha isoforms short (394 aa).

The disordered stretch occupies residues 1-23; sequence MGCLGNSKTEDQRNEEKAQREAN. Gly2 carries the N-palmitoyl glycine lipid modification. A lipid anchor (S-palmitoyl cysteine) is attached at Cys3. A compositionally biased stretch (basic and acidic residues) spans 8–23; that stretch reads KTEDQRNEEKAQREAN. A G-alpha domain is found at 39–394; the sequence is ATHRLLLLGA…RMHLRQYELL (356 aa). Residues 42–55 are G1 motif; that stretch reads RLLLLGAGESGKST. A GTP-binding site is contributed by 47 to 55; the sequence is GAGESGKST. Ser54 contributes to the Mg(2+) binding site. Positions 68–91 are disordered; it reads FNGEGGEEDPQAARSNSDGEKATK. The interval 196-204 is G2 motif; it reads DLLRCRVLT. GTP contacts are provided by residues 197–204, 223–227, and 292–295; these read LLRCRVLT, DVGGQ, and NKQD. Residue Thr204 participates in Mg(2+) binding. The segment at 219-228 is G3 motif; that stretch reads FHMFDVGGQR. The segment at 288–295 is G4 motif; that stretch reads ILFLNKQD. Lys300 is covalently cross-linked (Glycyl lysine isopeptide (Lys-Gly) (interchain with G-Cter in ubiquitin)). Residue Ser352 is modified to Phosphoserine. The interval 364-369 is G5 motif; the sequence is TCAVDT. Residue Ala366 coordinates GTP.

This sequence belongs to the G-alpha family. G(s) subfamily. In terms of assembly, heterotrimeric G proteins are composed of 3 units; alpha, beta and gamma. The alpha chain contains the guanine nucleotide binding site. Component of the TAS2R14-GNAS2 complex, consisting of TAS2R14, GNAS2, GNB1 and GNG2; within the complex interacts with TAS2R14; this complex plays a role in the perception of bitterness. Interacts with CRY1; the interaction may block GPCR-mediated regulation of cAMP concentrations. Interacts with ADCY6 and stimulates its adenylyl cyclase activity. Interacts with ADCY2 and ADCY5. Stimulates the ADCY5 adenylyl cyclase activity. Interacts (GDP-bound form) with RIC8B; promoting GNAS folding and association with the plasma membrane. Interaction with SASH1. Interacts with GASL2L2.

Its subcellular location is the cell membrane. It catalyses the reaction GTP + H2O = GDP + phosphate + H(+). Its function is as follows. Guanine nucleotide-binding proteins (G proteins) function as transducers in numerous signaling pathways controlled by G protein-coupled receptors (GPCRs). The alpha chain contains the guanine nucleotide binding site and alternates between an active, GTP-bound state and an inactive, GDP-bound state. Signaling by an activated GPCR promotes GDP release and GTP binding. The alpha subunit has a low GTPase activity that converts bound GTP to GDP, thereby terminating the signal. Both GDP release and GTP hydrolysis are modulated by numerous regulatory proteins. Signaling involves the activation of adenylyl cyclases, resulting in increased levels of the signaling molecule cAMP. Functions downstream of beta-adrenergic receptors. Stimulates the Ras signaling pathway via RAPGEF2. This is Guanine nucleotide-binding protein G(s) subunit alpha isoforms short (GNAS) from Bos taurus (Bovine).